The primary structure comprises 422 residues: Protein FAM53B (422 aa).

6 positions are modified to phosphoserine: Ser119, Ser168, Ser170, Ser180, Ser213, and Ser269. Disordered stretches follow at residues 193 to 225 (GQPC…GRLD) and 243 to 269 (CPPS…RSRS). Positions 244-269 (PPSANSTPASTPELARRSSGLARSRS) are enriched in low complexity. The Nuclear localization signal signature appears at 282-285 (KRRR). Ser335 and Ser344 each carry phosphoserine.

The protein belongs to the FAM53 family. In terms of assembly, interacts with CTNNB1.

Its subcellular location is the nucleus. Acts as a regulator of Wnt signaling pathway by regulating beta-catenin (CTNNB1) nuclear localization. The sequence is that of Protein FAM53B from Mus musculus (Mouse).